The following is a 364-amino-acid chain: E3 ubiquitin-protein ligase rnf146 (364 aa).

Residues 18–37 (KKVSGEAVPEGSGSPSSPSL) are disordered. The segment covering 22-34 (GEAVPEGSGSPSS) has biased composition (low complexity). An RING-type zinc finger spans residues 42–80 (CPICLQSCVHPVRLPCRHIFCFLCVKGASWHSKRCALCR). A WWE domain is found at 102–178 (SATGGCGTGS…EHGRRRRMKR (77 aa)). A glycoprotein contacts are provided by Y118, R121, W125, Y155, Q164, R174, and K186. Disordered regions lie at residues 217 to 262 (AAAE…PASS) and 279 to 364 (NEQE…VTKV). Composition is skewed to acidic residues over residues 281 to 295 (QEPE…DDSA) and 308 to 322 (TSDD…DENE).

Its subcellular location is the cytoplasm. The protein resides in the cytosol. The protein localises to the nucleus. The catalysed reaction is S-ubiquitinyl-[E2 ubiquitin-conjugating enzyme]-L-cysteine + [acceptor protein]-L-lysine = [E2 ubiquitin-conjugating enzyme]-L-cysteine + N(6)-ubiquitinyl-[acceptor protein]-L-lysine.. It participates in protein modification; protein ubiquitination. In terms of biological role, E3 ubiquitin-protein ligase that specifically binds poly-ADP-ribosylated proteins and mediates their ubiquitination and subsequent degradation. May regulate many important biological processes, such as cell survival and DNA damage response. Acts as an activator of the Wnt signaling pathway by mediating the ubiquitination of poly-ADP-ribosylated proteins. Neuroprotective protein. Protects against cell death induced by DNA damaging agents and rescues cells from G1 arrest. Promotes cell survival after gamma-irradiation. Facilitates DNA repair. In Danio rerio (Zebrafish), this protein is E3 ubiquitin-protein ligase rnf146 (rnf146).